Consider the following 149-residue polypeptide: D-aminoacyl-tRNA deacylase (149 aa).

Residues 137-138 (GP) carry the Gly-cisPro motif, important for rejection of L-amino acids motif.

This sequence belongs to the DTD family. As to quaternary structure, homodimer.

The protein localises to the cytoplasm. The enzyme catalyses glycyl-tRNA(Ala) + H2O = tRNA(Ala) + glycine + H(+). It catalyses the reaction a D-aminoacyl-tRNA + H2O = a tRNA + a D-alpha-amino acid + H(+). Functionally, an aminoacyl-tRNA editing enzyme that deacylates mischarged D-aminoacyl-tRNAs. Also deacylates mischarged glycyl-tRNA(Ala), protecting cells against glycine mischarging by AlaRS. Acts via tRNA-based rather than protein-based catalysis; rejects L-amino acids rather than detecting D-amino acids in the active site. By recycling D-aminoacyl-tRNA to D-amino acids and free tRNA molecules, this enzyme counteracts the toxicity associated with the formation of D-aminoacyl-tRNA entities in vivo and helps enforce protein L-homochirality. The polypeptide is D-aminoacyl-tRNA deacylase (Pediococcus pentosaceus (strain ATCC 25745 / CCUG 21536 / LMG 10740 / 183-1w)).